A 294-amino-acid chain; its full sequence is ATP synthase gamma chain (294 aa).

It belongs to the ATPase gamma chain family. As to quaternary structure, F-type ATPases have 2 components, CF(1) - the catalytic core - and CF(0) - the membrane proton channel. CF(1) has five subunits: alpha(3), beta(3), gamma(1), delta(1), epsilon(1). CF(0) has three main subunits: a, b and c.

Its subcellular location is the cell inner membrane. In terms of biological role, produces ATP from ADP in the presence of a proton gradient across the membrane. The gamma chain is believed to be important in regulating ATPase activity and the flow of protons through the CF(0) complex. This Campylobacter jejuni subsp. jejuni serotype O:23/36 (strain 81-176) protein is ATP synthase gamma chain.